A 101-amino-acid polypeptide reads, in one-letter code: Putative septation protein SpoVG (101 aa).

The protein belongs to the SpoVG family.

Its function is as follows. Could be involved in septation. This Anaeromyxobacter dehalogenans (strain 2CP-C) protein is Putative septation protein SpoVG.